A 198-amino-acid polypeptide reads, in one-letter code: (S)-2-hydroxypropylphosphonic acid epoxidase (198 aa).

The 56-residue stretch at 15–70 (LKDRREQVKMDHAALASLLGETPETVAAWENGEGGELTLTQLGRIAHVLGTSIGAL) folds into the HTH cro/C1-type domain. K23 provides a ligand contact to substrate. The segment at residues 26 to 45 (HAALASLLGETPETVAAWEN) is a DNA-binding region (H-T-H motif). Substrate-binding positions include R97, Y105, 135–138 (NSGH), and E142. A Cupin type-2 domain is found at 136-196 (SGHAGNEFLF…GTGSAKLIAV (61 aa)). Residues H138, E142, and H180 each contribute to the Fe cation site.

The protein belongs to the non-heme iron-dependent dioxygenase family. As to quaternary structure, homotetramer. Fe(2+) serves as cofactor.

It carries out the reaction (S)-2-hydroxypropylphosphonate + H2O2 = (1R,2S)-epoxypropylphosphonate + 2 H2O. The protein operates within antibiotic biosynthesis; fosfomycin biosynthesis. Its function is as follows. Non-heme-dependent dioxygenase that catalyzes the oxidative epoxidation of (S)-2-hydroxypropylphosphonate into (1R,2S)-epoxypropylphosphonate, the final step in the biosynthesis of fosfomycin antibiotic. The protein is (S)-2-hydroxypropylphosphonic acid epoxidase (hppE) of Streptomyces wedmorensis.